Reading from the N-terminus, the 426-residue chain is Enolase (426 aa).

Gln-162 lines the (2R)-2-phosphoglycerate pocket. The active-site Proton donor is the Glu-204. Residues Asp-241, Glu-284, and Asp-311 each contribute to the Mg(2+) site. (2R)-2-phosphoglycerate contacts are provided by Lys-336, Arg-365, Ser-366, and Lys-387. The active-site Proton acceptor is the Lys-336.

The protein belongs to the enolase family. Requires Mg(2+) as cofactor.

It is found in the cytoplasm. Its subcellular location is the secreted. The protein localises to the cell surface. It carries out the reaction (2R)-2-phosphoglycerate = phosphoenolpyruvate + H2O. It participates in carbohydrate degradation; glycolysis; pyruvate from D-glyceraldehyde 3-phosphate: step 4/5. Functionally, catalyzes the reversible conversion of 2-phosphoglycerate (2-PG) into phosphoenolpyruvate (PEP). It is essential for the degradation of carbohydrates via glycolysis. In Acidithiobacillus ferrooxidans (strain ATCC 23270 / DSM 14882 / CIP 104768 / NCIMB 8455) (Ferrobacillus ferrooxidans (strain ATCC 23270)), this protein is Enolase.